The chain runs to 71 residues: Small ribosomal subunit protein bS21 (71 aa).

The protein belongs to the bacterial ribosomal protein bS21 family.

This chain is Small ribosomal subunit protein bS21, found in Baumannia cicadellinicola subsp. Homalodisca coagulata.